The sequence spans 231 residues: uncharacterized protein (231 aa).

An NADP(+)-binding site is contributed by Val10–Val34. Ser140 is a binding site for substrate. Tyr153 (proton acceptor) is an active-site residue.

It belongs to the short-chain dehydrogenases/reductases (SDR) family.

This is an uncharacterized protein from Staphylococcus aureus (strain N315).